The following is a 70-amino-acid chain: GTVVAPMVGLEVKVLVKDGEKVQEGQPVLVLEAMKMEHVVKAPANGYVSGLEIKVGQSVQDGIKLFALKD.

Residues 1–69 (GTVVAPMVGL…QDGIKLFALK (69 aa)) form the Biotinyl-binding domain. Position 35 is an N6-biotinyllysine (lysine 35).

The protein localises to the plastid. It localises to the chloroplast. The protein operates within lipid metabolism; fatty acid biosynthesis. Functionally, this protein is a component of the acetyl coenzyme A carboxylase complex; first, biotin carboxylase catalyzes the carboxylation of the carrier protein and then the transcarboxylase transfers the carboxyl group to form malonyl-CoA. The sequence is that of Biotin carboxyl carrier protein of acetyl-CoA carboxylase from Solanum lycopersicum (Tomato).